The chain runs to 240 residues: UDP-2,3-diacylglucosamine hydrolase (240 aa).

Mn(2+) is bound by residues Asp-8, His-10, Asp-41, Asn-79, and His-114. 79–80 (NR) lines the substrate pocket. Substrate is bound by residues Asp-122, Ser-160, Asn-164, Lys-167, and His-195. Positions 195 and 197 each coordinate Mn(2+).

Belongs to the LpxH family. The cofactor is Mn(2+).

It is found in the cell inner membrane. It catalyses the reaction UDP-2-N,3-O-bis[(3R)-3-hydroxytetradecanoyl]-alpha-D-glucosamine + H2O = 2-N,3-O-bis[(3R)-3-hydroxytetradecanoyl]-alpha-D-glucosaminyl 1-phosphate + UMP + 2 H(+). The protein operates within glycolipid biosynthesis; lipid IV(A) biosynthesis; lipid IV(A) from (3R)-3-hydroxytetradecanoyl-[acyl-carrier-protein] and UDP-N-acetyl-alpha-D-glucosamine: step 4/6. Hydrolyzes the pyrophosphate bond of UDP-2,3-diacylglucosamine to yield 2,3-diacylglucosamine 1-phosphate (lipid X) and UMP by catalyzing the attack of water at the alpha-P atom. Involved in the biosynthesis of lipid A, a phosphorylated glycolipid that anchors the lipopolysaccharide to the outer membrane of the cell. The polypeptide is UDP-2,3-diacylglucosamine hydrolase (Salmonella arizonae (strain ATCC BAA-731 / CDC346-86 / RSK2980)).